Consider the following 206-residue polypeptide: Uridine kinase (206 aa).

11 to 18 contacts ATP; that stretch reads GGTGSGKS.

Belongs to the uridine kinase family.

The protein localises to the cytoplasm. It carries out the reaction uridine + ATP = UMP + ADP + H(+). The enzyme catalyses cytidine + ATP = CMP + ADP + H(+). Its pathway is pyrimidine metabolism; CTP biosynthesis via salvage pathway; CTP from cytidine: step 1/3. It functions in the pathway pyrimidine metabolism; UMP biosynthesis via salvage pathway; UMP from uridine: step 1/1. This chain is Uridine kinase, found in Clostridium botulinum (strain 657 / Type Ba4).